Consider the following 152-residue polypeptide: MDSKVVIYTDGACAGNPGPGGWGALLQFNDTSKEIFGYELDTTNNRMEITAALEALRILKKSCNVEIYTDSKYLQQGITAWIHNWIKNNWCKSNNEPVKNADLWQKLYAELSKHTIIWKWVKGHANNSGNIAADKLAVQGRETAIEILKCRG.

Residues 1 to 142 (MDSKVVIYTD…ADKLAVQGRE (142 aa)) form the RNase H type-1 domain. Mg(2+)-binding residues include Asp-10, Glu-48, Asp-70, and Asp-134.

It belongs to the RNase H family. Monomer. Mg(2+) is required as a cofactor.

The protein resides in the cytoplasm. It carries out the reaction Endonucleolytic cleavage to 5'-phosphomonoester.. In terms of biological role, endonuclease that specifically degrades the RNA of RNA-DNA hybrids. The polypeptide is Ribonuclease H (Rickettsia felis (strain ATCC VR-1525 / URRWXCal2) (Rickettsia azadi)).